A 516-amino-acid polypeptide reads, in one-letter code: Glycerol-3-phosphate dehydrogenase 1 (516 aa).

Residue 28 to 56 (DVIVIGGGITGVGIALDAATRGLTVALVE) participates in FAD binding.

The protein belongs to the FAD-dependent glycerol-3-phosphate dehydrogenase family. FAD serves as cofactor.

The protein localises to the cytoplasm. It carries out the reaction a quinone + sn-glycerol 3-phosphate = dihydroxyacetone phosphate + a quinol. This chain is Glycerol-3-phosphate dehydrogenase 1 (glpD1), found in Mycobacterium bovis (strain ATCC BAA-935 / AF2122/97).